Consider the following 271-residue polypeptide: Calcium-binding protein 4 (271 aa).

A disordered region spans residues 1 to 105 (MATEHNVQLV…RSDPQQDAAQ (105 aa)). Ser37 is modified (phosphoserine; by PKC/PRKCZ). A compositionally biased stretch (low complexity) spans 45-67 (GSQKASSGDQSSSQGSEASGSSK). The span at 87 to 96 (ASHRHSHRHR) shows a compositional bias: basic residues. 4 EF-hand domains span residues 125 to 160 (EELE…LGYM), 179 to 196 (GFVD…KLRE), 202 to 237 (LGVR…LLGE), and 239 to 271 (LEGT…LSTG). The Ca(2+) site is built by Asp138, Asp140, Asp142, Tyr144, and Glu149. Ca(2+) contacts are provided by Asp215, Asp217, Asp219, Arg221, Glu226, Asp252, Asn254, Asp256, Thr258, and Glu263.

As to quaternary structure, interacts with CACNA1F and CACNA1D (via IQ domain) in a calcium independent manner. Interacts (via N-terminus) with UNC119. Post-translationally, phosphorylated. Phosphorylation levels change with the light conditions and regulate the activity, but has no effect on calcium binding. As to expression, expressed in retina and in the inner hair cells (IHC) of the cochlea.

Its subcellular location is the cytoplasm. The protein resides in the presynapse. In terms of biological role, involved in normal synaptic function through regulation of Ca(2+) influx and neurotransmitter release in photoreceptor synaptic terminals and in auditory transmission. Modulator of CACNA1D and CACNA1F, suppressing the calcium-dependent inactivation and shifting the activation range to more hyperpolarized voltages. The sequence is that of Calcium-binding protein 4 (Cabp4) from Mus musculus (Mouse).